Reading from the N-terminus, the 226-residue chain is Uridylate kinase (226 aa).

ATP is bound at residue 6-10; it reads KISGK. Gly43 is a UMP binding site. Residues Gly44 and Arg48 each contribute to the ATP site. Residues Asp65 and 113–119 each bind UMP; that span reads FQPGQST. Thr139, Asn140, Tyr145, and Asp148 together coordinate ATP.

Belongs to the UMP kinase family. In terms of assembly, homohexamer.

Its subcellular location is the cytoplasm. The catalysed reaction is UMP + ATP = UDP + ADP. Its pathway is pyrimidine metabolism; CTP biosynthesis via de novo pathway; UDP from UMP (UMPK route): step 1/1. Its activity is regulated as follows. Inhibited by UTP. Functionally, catalyzes the reversible phosphorylation of UMP to UDP. This Sulfurisphaera tokodaii (strain DSM 16993 / JCM 10545 / NBRC 100140 / 7) (Sulfolobus tokodaii) protein is Uridylate kinase.